Reading from the N-terminus, the 91-residue chain is Small ribosomal subunit protein bS18 (91 aa).

This sequence belongs to the bacterial ribosomal protein bS18 family. Part of the 30S ribosomal subunit. Forms a tight heterodimer with protein bS6.

Its function is as follows. Binds as a heterodimer with protein bS6 to the central domain of the 16S rRNA, where it helps stabilize the platform of the 30S subunit. This chain is Small ribosomal subunit protein bS18, found in Burkholderia lata (strain ATCC 17760 / DSM 23089 / LMG 22485 / NCIMB 9086 / R18194 / 383).